A 526-amino-acid polypeptide reads, in one-letter code: D-arabinono-1,4-lactone oxidase (526 aa).

An FAD-binding PCMH-type domain is found at 22 to 196 (FWSRPSLYFQ…VYATLRTVPA (175 aa)). Pros-8alpha-FAD histidine is present on His59.

It belongs to the oxygen-dependent FAD-linked oxidoreductase family. FAD serves as cofactor.

The protein resides in the mitochondrion membrane. The enzyme catalyses D-arabinono-1,4-lactone + O2 = dehydro-D-arabinono-1,4-lactone + H2O2 + H(+). It participates in cofactor biosynthesis; D-erythroascorbate biosynthesis; dehydro-D-arabinono-1,4-lactone from D-arabinose: step 2/2. This chain is D-arabinono-1,4-lactone oxidase (ALO1), found in Yarrowia lipolytica (strain CLIB 122 / E 150) (Yeast).